Consider the following 325-residue polypeptide: GMP reductase (325 aa).

The Thioimidate intermediate role is filled by Cys174. NADP(+) is bound at residue 203–226; it reads IIADGGIRTHGDIAKSIRFGATMV.

It belongs to the IMPDH/GMPR family. GuaC type 2 subfamily.

It carries out the reaction IMP + NH4(+) + NADP(+) = GMP + NADPH + 2 H(+). Its function is as follows. Catalyzes the irreversible NADPH-dependent deamination of GMP to IMP. It functions in the conversion of nucleobase, nucleoside and nucleotide derivatives of G to A nucleotides, and in maintaining the intracellular balance of A and G nucleotides. The protein is GMP reductase of Helicobacter pylori (strain J99 / ATCC 700824) (Campylobacter pylori J99).